The primary structure comprises 541 residues: Plasminogen-binding protein PgbB (541 aa).

2 stretches are compositionally biased toward basic and acidic residues: residues His-420–Val-434 and Val-446–Lys-455. Residues His-420 to Lys-541 form a disordered region. The segment covering Asp-456 to Ile-476 has biased composition (polar residues). Over residues Asn-480–Lys-541 the composition is skewed to basic and acidic residues.

The protein localises to the cell surface. Binds plasminogen, specifically, and in a concentration and lysine-dependent manner. Plasminogen is the precursor of plasmin, a serine protease that cleaves fibrin, fibronectin, laminin and vitronectin. Acquisition of plasminogen/plasmin could enable H.pylori to degrade host components. The sequence is that of Plasminogen-binding protein PgbB (pgbB) from Helicobacter pylori (strain J99 / ATCC 700824) (Campylobacter pylori J99).